Here is a 172-residue protein sequence, read N- to C-terminus: MAKMQAKVQQDERDDGLREKMISVNRVTKVVKGGRILGFAALTVVGDGDGRIGMGKGKAKEVPVAVQKAMDEARRKMVKVSLKNGTLQHEVVGKHGAAKVLMMPAKEGTGVIAGGPMRAIFEVMGVTNVVTKSHGSTNPYNMVRATLDGLQKMSTPSEIAAKRGKSVEDILG.

The S5 DRBM domain maps to 17–80; it reads LREKMISVNR…DEARRKMVKV (64 aa).

It belongs to the universal ribosomal protein uS5 family. As to quaternary structure, part of the 30S ribosomal subunit. Contacts proteins S4 and S8.

Functionally, with S4 and S12 plays an important role in translational accuracy. In terms of biological role, located at the back of the 30S subunit body where it stabilizes the conformation of the head with respect to the body. The protein is Small ribosomal subunit protein uS5 of Cupriavidus pinatubonensis (strain JMP 134 / LMG 1197) (Cupriavidus necator (strain JMP 134)).